The sequence spans 736 residues: Na(+)/H(+) antiporter NhaA (736 aa).

Residues 1 to 387 are na(+)/H(+) antiporter NhaA; the sequence is MNHSPQSARP…ICGYLLLRAA (387 aa). The next 11 membrane-spanning stretches (helical) occupy residues 23–43, 58–78, 96–116, 126–146, 155–175, 178–198, 201–221, 265–285, 298–318, 334–354, and 367–387; these read AGGI…NSPF, LSLA…LVGL, MLPG…FAVL, GWAV…SLLG, VFLA…IAIF, AEIS…LFVM, MDVV…FFVF, VAFI…FKGL, ILLG…WLAI, LYGV…IGLL, and IGVL…LRAA. Residues 388–736 form a peptidase S49 region; the sequence is RPDQSAANPL…EKAIWARYGL (349 aa).

In the N-terminal section; belongs to the NhaA Na(+)/H(+) (TC 2.A.33) antiporter family. This sequence in the C-terminal section; belongs to the peptidase S49 family.

Its subcellular location is the cell inner membrane. The enzyme catalyses Na(+)(in) + 2 H(+)(out) = Na(+)(out) + 2 H(+)(in). Its function is as follows. Na(+)/H(+) antiporter that extrudes sodium in exchange for external protons. This is Na(+)/H(+) antiporter NhaA from Brucella melitensis biotype 1 (strain ATCC 23456 / CCUG 17765 / NCTC 10094 / 16M).